The primary structure comprises 91 residues: Cell division topological specificity factor (91 aa).

The protein belongs to the MinE family.

In terms of biological role, prevents the cell division inhibition by proteins MinC and MinD at internal division sites while permitting inhibition at polar sites. This ensures cell division at the proper site by restricting the formation of a division septum at the midpoint of the long axis of the cell. In Desulfitobacterium hafniense (strain DSM 10664 / DCB-2), this protein is Cell division topological specificity factor.